The following is an 89-amino-acid chain: Small ribosomal subunit protein uS15 (89 aa).

The disordered stretch occupies residues 1 to 25; it reads MSLDTTEKQQLINTHQTHGTDTGSA. The span at 8–25 shows a compositional bias: polar residues; it reads KQQLINTHQTHGTDTGSA.

Belongs to the universal ribosomal protein uS15 family. In terms of assembly, part of the 30S ribosomal subunit. Forms a bridge to the 50S subunit in the 70S ribosome, contacting the 23S rRNA.

One of the primary rRNA binding proteins, it binds directly to 16S rRNA where it helps nucleate assembly of the platform of the 30S subunit by binding and bridging several RNA helices of the 16S rRNA. In terms of biological role, forms an intersubunit bridge (bridge B4) with the 23S rRNA of the 50S subunit in the ribosome. In Synechococcus sp. (strain CC9902), this protein is Small ribosomal subunit protein uS15.